Here is an 85-residue protein sequence, read N- to C-terminus: U4-theraphotoxin-Hhn1a (85 aa).

The N-terminal stretch at 1-22 (MKVTLIAILTCAAALVLHTTAA) is a signal peptide. Residues 23–48 (EELEAESQLMEVGMPDTELAAVDEER) constitute a propeptide that is removed on maturation. 3 disulfide bridges follow: cysteine 52–cysteine 66, cysteine 56–cysteine 77, and cysteine 71–cysteine 82.

Belongs to the neurotoxin 12 (Hwtx-2) family. 02 (Hwtx-2) subfamily. Monomer. In terms of tissue distribution, expressed by the venom gland.

It localises to the secreted. Neurotoxin active on both insects and mammals. In Cyriopagopus hainanus (Chinese bird spider), this protein is U4-theraphotoxin-Hhn1a.